Reading from the N-terminus, the 1285-residue chain is Peroxisomal ATPase PEX1 (1285 aa).

Residues 344–353 show a composition bias toward polar residues; that stretch reads QQGKTKQSVM. Positions 344 to 373 are disordered; it reads QQGKTKQSVMSPEKEKHPLESPNHKQIGSD. Residue Ser-354 is modified to Phosphoserine. Residues 355–373 show a composition bias toward basic and acidic residues; the sequence is PEKEKHPLESPNHKQIGSD. ATP contacts are provided by residues 601 to 608 and 883 to 890; these read GGKGSGKS and GPPGTGKT. Over residues 1142–1161 the composition is skewed to polar residues; it reads NGTSSDLSSQCPSAPSSVTQ. A disordered region spans residues 1142–1162; the sequence is NGTSSDLSSQCPSAPSSVTQD. A phosphoserine mark is found at Ser-1183, Ser-1211, and Ser-1213. Positions 1262-1285 are disordered; it reads FQNPKKRKNPSGTVFRPGQKVTLA.

It belongs to the AAA ATPase family. As to quaternary structure, homooligomer; homooligomerizes in the cytosol, interaction with PEX6 promotes dissociation of the homooligomer. Interacts with PEX6; forming the PEX1-PEX6 AAA ATPase complex, which is composed of a heterohexamer formed by a trimer of PEX1-PEX6 dimers. Interacts indirectly with PEX26, via its interaction with PEX6.

It localises to the cytoplasm. It is found in the cytosol. Its subcellular location is the peroxisome membrane. It carries out the reaction ATP + H2O = ADP + phosphate + H(+). Functionally, component of the PEX1-PEX6 AAA ATPase complex, a protein dislocase complex that mediates the ATP-dependent extraction of the PEX5 receptor from peroxisomal membranes, an essential step for PEX5 recycling. Specifically recognizes PEX5 monoubiquitinated at 'Cys-11', and pulls it out of the peroxisome lumen through the PEX2-PEX10-PEX12 retrotranslocation channel. Extraction by the PEX1-PEX6 AAA ATPase complex is accompanied by unfolding of the TPR repeats and release of bound cargo from PEX5. This Cricetulus griseus (Chinese hamster) protein is Peroxisomal ATPase PEX1.